The sequence spans 175 residues: Beta-carotene hydroxylase (175 aa).

The region spanning 11-136 (FVTVIGMEVI…RGKEGCVSFG (126 aa)) is the Fatty acid hydroxylase domain.

This sequence belongs to the sterol desaturase family.

It carries out the reaction all-trans-beta-carotene + 4 reduced [2Fe-2S]-[ferredoxin] + 2 O2 + 4 H(+) = all-trans-zeaxanthin + 4 oxidized [2Fe-2S]-[ferredoxin] + 2 H2O. It functions in the pathway carotenoid biosynthesis; zeaxanthin biosynthesis. In terms of biological role, catalyzes the hydroxylation reaction from beta-carotene to zeaxanthin. The polypeptide is Beta-carotene hydroxylase (crtZ) (Pantoea ananas (Erwinia uredovora)).